Consider the following 121-residue polypeptide: Small ribosomal subunit protein uS11 (121 aa).

This sequence belongs to the universal ribosomal protein uS11 family. As to quaternary structure, part of the 30S ribosomal subunit. Interacts with proteins S7 and S18. Binds to IF-3.

Its function is as follows. Located on the platform of the 30S subunit, it bridges several disparate RNA helices of the 16S rRNA. Forms part of the Shine-Dalgarno cleft in the 70S ribosome. The chain is Small ribosomal subunit protein uS11 from Ureaplasma parvum serovar 3 (strain ATCC 27815 / 27 / NCTC 11736).